A 500-amino-acid chain; its full sequence is Keratin, type II cuticular Hb1 (500 aa).

The tract at residues 1-106 (MTCGSGFRGR…PNAQCVKQEE (106 aa)) is head. The 312-residue stretch at 106–417 (EKEQIKCLNN…RLLEGEEQRL (312 aa)) folds into the IF rod domain. Residues 107 to 141 (KEQIKCLNNRFAAFIDKVRFLEQQNKLLETKLQFY) form a coil 1A region. Residues 142-151 (QNRQCCESNL) are linker 1. The segment at 152–252 (EPLFNGYIET…YEEEIRVLQA (101 aa)) is coil 1B. Residue K212 forms a Glycyl lysine isopeptide (Lys-Gly) (interchain with G-Cter in SUMO1) linkage. The interval 253–269 (HISDTSVIVKMDNSRDL) is linker 12. The interval 270 to 413 (NMDNIVAEIK…ATYRRLLEGE (144 aa)) is coil 2. Residues 414–500 (EQRLCEGVGS…GSCASVCRKC (87 aa)) are tail.

This sequence belongs to the intermediate filament family. Heterotetramer of two type I and two type II keratins.

This chain is Keratin, type II cuticular Hb1, found in Bos taurus (Bovine).